Here is a 142-residue protein sequence, read N- to C-terminus: MKFLTVAIVLAAAASAAPTKEVLPYPPVVAPPPYGGIAPDHNPPFGGGIPPINSGGLPPTNGAYPGGNNRHLCPSGLLYTNPQCCSAGVLGVADLDCKTPSSVPMNGADFERICAADGSKAQCCSVPVAGLALLCQDAIGTN.

A signal peptide spans Met-1–Ala-16. 4 disulfides stabilise this stretch: Cys-73–Cys-123, Cys-84–Cys-114, Cys-85–Cys-97, and Cys-124–Cys-135.

It belongs to the cerato-ulmin hydrophobin family. In terms of assembly, homodimer. Homodimers further self-assemble to form highly ordered films at water-air interfaces through intermolecular interactions.

Its subcellular location is the secreted. The protein localises to the cell wall. Aerial growth, conidiation, and dispersal of filamentous fungi in the environment rely upon a capability of their secreting small amphipathic proteins called hydrophobins (HPBs) with low sequence identity. Class I can self-assemble into an outermost layer of rodlet bundles on aerial cell surfaces, conferring cellular hydrophobicity that supports fungal growth, development and dispersal; whereas Class II form highly ordered films at water-air interfaces through intermolecular interactions but contribute nothing to the rodlet structure. This Trichoderma asperellum (strain ATCC 204424 / CBS 433.97 / NBRC 101777) protein is Class II hydrophobin 7.